The primary structure comprises 185 residues: Small ribosomal subunit protein uS4c (185 aa).

Residues 72–134 (MRLDNVIFRL…PTSCNALKGE (63 aa)) form the S4 RNA-binding domain. Residues 132–154 (KGESPGGGETPDHLTASLSEGSR) are disordered.

It belongs to the universal ribosomal protein uS4 family. In terms of assembly, part of the 30S ribosomal subunit. Contacts protein S5. The interaction surface between S4 and S5 is involved in control of translational fidelity.

It localises to the plastid. The protein resides in the chloroplast. Its function is as follows. One of the primary rRNA binding proteins, it binds directly to 16S rRNA where it nucleates assembly of the body of the 30S subunit. Functionally, with S5 and S12 plays an important role in translational accuracy. This is Small ribosomal subunit protein uS4c (rps4) from Woodwardia radicans (Rooting chainfern).